Reading from the N-terminus, the 379-residue chain is Succinyl-diaminopimelate desuccinylase (379 aa).

His-70 serves as a coordination point for Zn(2+). The active site involves Asp-72. Asp-103 contacts Zn(2+). Glu-137 serves as the catalytic Proton acceptor. Zn(2+) contacts are provided by Glu-138, Glu-166, and His-352.

This sequence belongs to the peptidase M20A family. DapE subfamily. As to quaternary structure, homodimer. Requires Zn(2+) as cofactor. It depends on Co(2+) as a cofactor.

The enzyme catalyses N-succinyl-(2S,6S)-2,6-diaminopimelate + H2O = (2S,6S)-2,6-diaminopimelate + succinate. It functions in the pathway amino-acid biosynthesis; L-lysine biosynthesis via DAP pathway; LL-2,6-diaminopimelate from (S)-tetrahydrodipicolinate (succinylase route): step 3/3. Functionally, catalyzes the hydrolysis of N-succinyl-L,L-diaminopimelic acid (SDAP), forming succinate and LL-2,6-diaminopimelate (DAP), an intermediate involved in the bacterial biosynthesis of lysine and meso-diaminopimelic acid, an essential component of bacterial cell walls. This Shewanella putrefaciens (strain CN-32 / ATCC BAA-453) protein is Succinyl-diaminopimelate desuccinylase.